A 507-amino-acid polypeptide reads, in one-letter code: Polygalacturonase (507 aa).

An N-terminal signal peptide occupies residues 1 to 20 (MSMKFMAALAFLALQLIVMA). Positions 21–54 (AGEDQSAQIMLDSDTKQYHRSSRNLRKRVHHARH) are excised as a propeptide. PbH1 repeat units lie at residues 215 to 241 (CDGVKIQGIKIKAPRDSPNTDGIDIFA), 242 to 263 (SKRFEIEKCTIGTGDDCVAVGT), 265 to 285 (SSNITIKDLTCGPGHGMSIGS), 295 to 316 (VSFVHLDGAKFIDTQNGLRIKT), 324 to 345 (ASHITYENVEMINAENPILINQ), and 358 to 385 (RSAVKIQDVTFKNIHGTSATTAAIQLMC). Residue aspartate 256 is the Proton donor of the active site. Residue asparagine 267 is glycosylated (N-linked (GlcNAc...) asparagine). Residue histidine 279 is part of the active site.

The protein belongs to the glycosyl hydrolase 28 family.

The protein resides in the secreted. Its subcellular location is the cell wall. It carries out the reaction (1,4-alpha-D-galacturonosyl)n+m + H2O = (1,4-alpha-D-galacturonosyl)n + (1,4-alpha-D-galacturonosyl)m.. In Juniperus ashei (Ozark white cedar), this protein is Polygalacturonase (JNA2).